The sequence spans 142 residues: MVLSAADKTNVKAAWGKVGGNAGEFGAEALERMFLGFPTTKTYFPHFDLSHGSAQVKAHGKKVGDALTLAVGHLDDLPGALSNLSDLHAHKLRVDPVNFKLLSHCLLSTLAVHLPNDFTPAVHASLDKFLSTVSTVLTSKYR.

Residues 2 to 142 form the Globin domain; sequence VLSAADKTNV…VSTVLTSKYR (141 aa). Histidine 59 is a binding site for O2. Histidine 88 is a heme b binding site.

Belongs to the globin family. Heterotetramer of two alpha chains and two beta chains. In terms of tissue distribution, red blood cells.

Functionally, involved in oxygen transport from the lung to the various peripheral tissues. In terms of biological role, hemopressin acts as an antagonist peptide of the cannabinoid receptor CNR1. Hemopressin-binding efficiently blocks cannabinoid receptor CNR1 and subsequent signaling. The sequence is that of Hemoglobin subunit alpha-2 (HBA2) from Equus quagga burchellii (Burchell's zebra).